We begin with the raw amino-acid sequence, 673 residues long: UvrABC system protein B (673 aa).

Residues 26-183 enclose the Helicase ATP-binding domain; sequence EGLEDGLAHQ…RRLAELQYAR (158 aa). 39 to 46 provides a ligand contact to ATP; sequence GVTGSGKT. Residues 92–115 carry the Beta-hairpin motif; it reads YYDYYQPEAYVPSSDTFIEKDASV. One can recognise a Helicase C-terminal domain in the interval 431–597; sequence QVDDLLSEIR…GLNKKVVDIL (167 aa). The tract at residues 608 to 627 is disordered; sequence AKGRGKSRPIVEPDNVPMDM. A UVR domain is found at 633-668; sequence QQKIHELEGLMMQHAQNLEFEEAAQIRDQLHQLRDL.

This sequence belongs to the UvrB family. As to quaternary structure, forms a heterotetramer with UvrA during the search for lesions. Interacts with UvrC in an incision complex.

Its subcellular location is the cytoplasm. In terms of biological role, the UvrABC repair system catalyzes the recognition and processing of DNA lesions. A damage recognition complex composed of 2 UvrA and 2 UvrB subunits scans DNA for abnormalities. Upon binding of the UvrA(2)B(2) complex to a putative damaged site, the DNA wraps around one UvrB monomer. DNA wrap is dependent on ATP binding by UvrB and probably causes local melting of the DNA helix, facilitating insertion of UvrB beta-hairpin between the DNA strands. Then UvrB probes one DNA strand for the presence of a lesion. If a lesion is found the UvrA subunits dissociate and the UvrB-DNA preincision complex is formed. This complex is subsequently bound by UvrC and the second UvrB is released. If no lesion is found, the DNA wraps around the other UvrB subunit that will check the other stand for damage. In Escherichia coli O7:K1 (strain IAI39 / ExPEC), this protein is UvrABC system protein B.